The chain runs to 544 residues: uncharacterized protein (544 aa).

The signal sequence occupies residues Met1–Tyr22.

This is an uncharacterized protein from Methanocaldococcus jannaschii (strain ATCC 43067 / DSM 2661 / JAL-1 / JCM 10045 / NBRC 100440) (Methanococcus jannaschii).